The sequence spans 337 residues: Aspartate carbamoyltransferase catalytic subunit (337 aa).

Carbamoyl phosphate-binding residues include Arg54 and Thr55. Lys82 serves as a coordination point for L-aspartate. Carbamoyl phosphate contacts are provided by Arg104, His134, and Gln137. L-aspartate-binding residues include Arg177 and Arg232. Residues Gly277 and Pro278 each coordinate carbamoyl phosphate.

This sequence belongs to the aspartate/ornithine carbamoyltransferase superfamily. ATCase family. In terms of assembly, heterododecamer (2C3:3R2) of six catalytic PyrB chains organized as two trimers (C3), and six regulatory PyrI chains organized as three dimers (R2).

The catalysed reaction is carbamoyl phosphate + L-aspartate = N-carbamoyl-L-aspartate + phosphate + H(+). It participates in pyrimidine metabolism; UMP biosynthesis via de novo pathway; (S)-dihydroorotate from bicarbonate: step 2/3. Its function is as follows. Catalyzes the condensation of carbamoyl phosphate and aspartate to form carbamoyl aspartate and inorganic phosphate, the committed step in the de novo pyrimidine nucleotide biosynthesis pathway. This is Aspartate carbamoyltransferase catalytic subunit from Arthrobacter sp. (strain FB24).